Reading from the N-terminus, the 177-residue chain is uncharacterized protein (177 aa).

Transmembrane regions (helical) follow at residues 20–42, 62–84, 94–116, and 136–158; these read NLVS…LLAL, VVLW…VSLS, AMSS…GYFI, and GLLY…IIVA.

The protein localises to the cell membrane. This is an uncharacterized protein from Methanocaldococcus jannaschii (strain ATCC 43067 / DSM 2661 / JAL-1 / JCM 10045 / NBRC 100440) (Methanococcus jannaschii).